Reading from the N-terminus, the 229-residue chain is Ribonuclease 3 (229 aa).

The RNase III domain occupies 7-132; that stretch reads LRAFESRIGH…VIAAVYLDAG (126 aa). Glu45 lines the Mg(2+) pocket. Residue Asp49 is part of the active site. Mg(2+)-binding residues include Asp118 and Glu121. Residue Glu121 is part of the active site. The DRBM domain maps to 157 to 226; sequence DAKTALQEWA…ARALLARMEA (70 aa).

It belongs to the ribonuclease III family. Homodimer. Mg(2+) serves as cofactor.

The protein localises to the cytoplasm. The catalysed reaction is Endonucleolytic cleavage to 5'-phosphomonoester.. Functionally, digests double-stranded RNA. Involved in the processing of primary rRNA transcript to yield the immediate precursors to the large and small rRNAs (23S and 16S). Processes some mRNAs, and tRNAs when they are encoded in the rRNA operon. Processes pre-crRNA and tracrRNA of type II CRISPR loci if present in the organism. This chain is Ribonuclease 3, found in Cereibacter sphaeroides (strain ATCC 17025 / ATH 2.4.3) (Rhodobacter sphaeroides).